We begin with the raw amino-acid sequence, 358 residues long: Purine permease 2 (358 aa).

A run of 10 helical transmembrane segments spans residues valine 6 to methionine 26, isoleucine 37 to leucine 57, phenylalanine 74 to phenylalanine 94, threonine 110 to valine 130, phenylalanine 134 to leucine 154, valine 170 to valine 190, phenylalanine 209 to glycine 229, valine 262 to phenylalanine 282, valine 288 to phenylalanine 308, and phenylalanine 312 to tyrosine 332. An EamA domain is found at valine 46 to leucine 154.

This sequence belongs to the purine permeases (TC 2.A.7.14) family. In terms of tissue distribution, expressed in the vascular system of leaves. Restricted to the phloem. Expressed in flowers and roots and not detected in stems.

Its subcellular location is the membrane. Its activity is regulated as follows. Competitive inhibition of adenine transport by isopentenyladenine, kinetin, benzylaminopurine, trans- and cis-zeatin and trans-zeatin riboside. Functionally, mediates adenine transport. May be involved in the uptake of cytokinin analogs. The polypeptide is Purine permease 2 (PUP2) (Arabidopsis thaliana (Mouse-ear cress)).